We begin with the raw amino-acid sequence, 219 residues long: MTVQLGAFYLFPLFMAGFVQTNSNLEKMDCYKDVTGTIYDYDAFTLNGNEHIQFKQYAGKHVLFVNVATYCGLTAQYPELNTLQEELKPFGLVVLGFPCNQFGKQEPGENSEILLGLKYVRPGGGYVPNFQLFEKGDVNGEKEQKVFTFLKHSCPHPSELIGSIGYISWEPIRVHDIRWNFEKFLVGPDGVPVMRWVHETPISTVKSDILAYLKQFKTE.

The N-terminal stretch at methionine 1–threonine 21 is a signal peptide. The active site involves cysteine 71.

It belongs to the glutathione peroxidase family. As to quaternary structure, homotetramer. In terms of tissue distribution, proximal caput epididymis.

Its subcellular location is the secreted. The enzyme catalyses 2 glutathione + H2O2 = glutathione disulfide + 2 H2O. In terms of biological role, may constitute a glutathione peroxidase-like protective system against peroxide damage in sperm membrane lipids. Since the purified porcine enzyme has very little activity towards hydrogen peroxide or organic hydroperoxides the protective effect is not likely to be exerted by its enzymatic activity. Instead, may protect sperm from premature acrosome reaction in the epididymis by binding to lipid peroxides, which might otherwise interact with phospholipase A2 and induce the acrosome reaction. The protein is Epididymal secretory glutathione peroxidase (GPX5) of Sus scrofa (Pig).